Consider the following 249-residue polypeptide: Transmembrane protein 150C (249 aa).

The Cytoplasmic portion of the chain corresponds to 1 to 9 (MDGKKCSVW). The helical transmembrane segment at 10–30 (MFLPLVFTVFTSAGLWIVYFI) threads the bilayer. At 31–64 (AVEDDKIFPLNSAERKPGVKHAPYISIAGDEPPA) the chain is on the extracellular side. A helical membrane pass occupies residues 65–85 (SCVFSQVMNMAAFLALVVAVL). Residues 86–97 (RFIQLKPKVLNP) are Cytoplasmic-facing. The helical transmembrane segment at 98–118 (WLNISGLVALCLASFGMTLLG) threads the bilayer. Residues 119-130 (NFQLTNDEEIHN) are Extracellular-facing. Residues 131–151 (VGTSLTFGFGTLTCWIQAALT) traverse the membrane as a helical segment. Over 152-168 (LKVNIKNEGRKVGIPRV) the chain is Cytoplasmic. A helical transmembrane segment spans residues 169 to 189 (ILSASITLCVVLYFILMAQGI). The Extracellular segment spans residues 190-192 (HMY). Residues 193-213 (AARVQWGLVMCFLSYFGTFAV) traverse the membrane as a helical segment. At 214-249 (EFRHYRYEIVCSEYQENFLSFSESLSEASEYQTDQV) the chain is on the cytoplasmic side.

The protein belongs to the DRAM/TMEM150 family.

The protein resides in the cell membrane. Its subcellular location is the lysosome membrane. The catalysed reaction is Ca(2+)(in) = Ca(2+)(out). It catalyses the reaction Na(+)(in) = Na(+)(out). The enzyme catalyses K(+)(in) = K(+)(out). It carries out the reaction Mg(2+)(in) = Mg(2+)(out). In terms of biological role, nonselective cationic channel with high permeability to Ca(2+). Component of a mechanosensitive cation channel. Confers mechanically activated (MA) currents with slow inactivation kinetics. May contribute to proprioception. The sequence is that of Transmembrane protein 150C (TMEM150C) from Bos taurus (Bovine).